The primary structure comprises 459 residues: Nucleobindin-1 (459 aa).

Positions 1 to 25 (MPTSVPRGAPFLLLPPLLMLSAVLA) are cleaved as a signal peptide. The residue at position 85 (serine 85) is a Phosphoserine. Residue threonine 147 is modified to Phosphothreonine. The stretch at 149–217 (EARDLELLIQ…QQRRHREHPK (69 aa)) forms a coiled coil. The DNA-binding element occupies 171–217 (HHEEFKRYEMLKEHERRRYLESLGEEQRKEAERKLQEQQRRHREHPK). Basic and acidic residues predominate over residues 192-209 (SLGEEQRKEAERKLQEQQ). The tract at residues 192–220 (SLGEEQRKEAERKLQEQQRRHREHPKVNV) is disordered. Residues 227-320 (LKEVWEELDG…VTLEEFLAST (94 aa)) are binds to GNAI2 and GNAI3. 2 EF-hand domains span residues 239–274 (PNRF…ELEK) and 291–326 (ERLR…KEFG). Ca(2+) is bound by residues aspartate 252, asparagine 254, aspartate 256, glutamate 263, aspartate 304, asparagine 306, aspartate 308, and glutamate 315. Residues 302-332 (NVDTNQDRLVTLEEFLASTQRKEFGETAEGW) carry the GBA motif. The stretch at 340-407 (AYTEEELKRF…RKQQQQEQSA (68 aa)) forms a coiled coil. Phosphoserine is present on serine 368. Residues 393 to 459 (LQMEQRKQQQ…VLPQLDSQHL (67 aa)) form a disordered region. Residues 433-445 (DQKDVPASEKKVP) are compositionally biased toward basic and acidic residues. Serine 456 is subject to Phosphoserine.

This sequence belongs to the nucleobindin family. In terms of assembly, interacts (via GBA motif) with guanine nucleotide-binding protein G(i) alpha subunits GNAI1, GNAI2 and GNAI3 with higher affinity for GNAI1 and GNAI3 than for GNAI2. Preferentially interacts with inactive rather than active GNAI3. Interaction with GNAI3 is inhibited when NUCB1 binds calcium, probably due to a conformational change which renders the GBA motif inaccessible. In terms of tissue distribution, minor constituent of the mineralized matrix of bone. Detected in calvaria, rib cartilage, liver, kidney, spleen, brain, lung, skeletal and heart muscle with highest expression in calvaria and approximately half the amount in kidney, liver and brain.

The protein localises to the golgi apparatus. It is found in the cis-Golgi network membrane. Its subcellular location is the cytoplasm. It localises to the secreted. Its function is as follows. Major calcium-binding protein of the Golgi which may have a role in calcium homeostasis. Acts as a non-receptor guanine nucleotide exchange factor which binds to and activates alpha subunits of guanine nucleotide-binding proteins (G proteins). The protein is Nucleobindin-1 (Nucb1) of Rattus norvegicus (Rat).